Reading from the N-terminus, the 367-residue chain is C-X-C chemokine receptor type 3 (367 aa).

The Extracellular portion of the chain corresponds to 1–56; the sequence is MYLEVSERQVLDASDIAFLLENSTSPYDYGENESDFSDSPPCPQDFSLNFDRTFLP. N-linked (GlcNAc...) asparagine glycosylation occurs at N22. Sulfotyrosine is present on residues Y27 and Y29. N-linked (GlcNAc...) asparagine glycosylation occurs at N32. A helical membrane pass occupies residues 57 to 77; that stretch reads VLYSLLFLLGLLGNGAVAAVL. The Cytoplasmic portion of the chain corresponds to 78-89; it reads LSQRTALSSTDT. The chain crosses the membrane as a helical span at residues 90–110; it reads FLLHLAVADVLLVLTLPLWAV. The Extracellular portion of the chain corresponds to 111-125; sequence DAAAQWVFGSGLCKV. The cysteines at positions 123 and 202 are disulfide-linked. The chain crosses the membrane as a helical span at residues 126–146; sequence AGALFNINFYAGAFLLACISF. At 147 to 168 the chain is on the cytoplasmic side; the sequence is DRYLSIVHATQIYRRDPWVRVA. The chain crosses the membrane as a helical span at residues 169 to 189; that stretch reads LTCIVVWGLCVLFALPDFIFL. Over 190–222 the chain is Extracellular; it reads SASHDQRLNATHCQYNFPQVGRTALRVLQLVAG. N198 carries an N-linked (GlcNAc...) asparagine glycan. Residues 223–243 traverse the membrane as a helical segment; it reads FLMPLLVMAYCYAHILAVLLV. The Cytoplasmic segment spans residues 244 to 255; sequence SRGQRRFRAMRL. Residues 256–276 form a helical membrane-spanning segment; that stretch reads VVVVVVAFAVCWTPYHLVVLV. At 277–300 the chain is on the extracellular side; it reads DILMDVGVLARNCGRESHVDVAKS. A helical transmembrane segment spans residues 301 to 321; that stretch reads VTSGMGYMHCCLNPLLYAFVG. Residues 322–367 lie on the Cytoplasmic side of the membrane; the sequence is VKFKEQMWMLLMRLGRSDQRGPQRQPSSSRRESSWSETTEASYLGL. Residues 339-367 form a disordered region; it reads DQRGPQRQPSSSRRESSWSETTEASYLGL.

This sequence belongs to the G-protein coupled receptor 1 family. As to quaternary structure, homomer. Forms heteromers with ACKR4. Interacts with PF4/CXCL4. Post-translationally, sulfation on Tyr-27 and Tyr-29 is essential for CXCL10 binding. In terms of processing, N-glycosylated.

Its subcellular location is the cell membrane. Receptor for the C-X-C chemokine CXCL9, CXCL10 and CXCL11 and mediates the proliferation, survival and angiogenic activity of mesangial cells through a heterotrimeric G-protein signaling pathway. Probably promotes cell chemotaxis response. Binds to CCL21. Upon activation by PF4, induces activated T-lymphocytes migration mediated via downstream Ras/extracellular signal-regulated kinase (ERK) signaling. The polypeptide is C-X-C chemokine receptor type 3 (Cxcr3) (Rattus norvegicus (Rat)).